Reading from the N-terminus, the 792-residue chain is Pentatricopeptide repeat-containing protein At4g30700 (792 aa).

16 PPR repeats span residues 51–81, 82–117, 118–152, 153–183, 184–218, 220–254, 255–285, 286–320, 321–352, 353–383, 384–418, 419–453, 454–484, 485–519, 520–555, and 556–586; these read DISL…VQRP, DVFL…DLKP, NSST…GCDS, ELLL…MPEK, DTIL…SCTR, DTTT…GCYS, HDYV…FRKP, DIVA…GARL, RSST…NFLS, HASV…SPEK, SLPS…EFSP, NPVT…DFES, SIYV…MTKK, NEVT…GITP, TPVT…GFEP, and SVKH…MSIE. Residues 591–666 are type E motif; it reads VWETLLGACR…APGYTLIEIG (76 aa). Residues 667-697 form a type E(+) motif region; it reads ETPHVFTSGDQSHPQVKEIYEKLEKLEGKMR. Positions 698–792 are type DYW motif; it reads EAGYQPETEL…DGVCSCGDYW (95 aa).

This sequence belongs to the PPR family. PCMP-H subfamily.

The protein is Pentatricopeptide repeat-containing protein At4g30700 (DYW9) of Arabidopsis thaliana (Mouse-ear cress).